Here is a 258-residue protein sequence, read N- to C-terminus: Glutamate racemase (258 aa).

Substrate is bound by residues 12–13 (DS) and 44–45 (YG). Cysteine 75 acts as the Proton donor/acceptor in catalysis. Residue 76–77 (NT) participates in substrate binding. Catalysis depends on cysteine 186, which acts as the Proton donor/acceptor. Residue 187–188 (TH) coordinates substrate.

It belongs to the aspartate/glutamate racemases family.

It catalyses the reaction L-glutamate = D-glutamate. The protein operates within cell wall biogenesis; peptidoglycan biosynthesis. Functionally, provides the (R)-glutamate required for cell wall biosynthesis. This Clostridium botulinum (strain Alaska E43 / Type E3) protein is Glutamate racemase.